Consider the following 277-residue polypeptide: Orotidine 5'-phosphate decarboxylase (277 aa).

Lys-95 acts as the Proton donor in catalysis.

This sequence belongs to the OMP decarboxylase family. Type 2 subfamily.

The catalysed reaction is orotidine 5'-phosphate + H(+) = UMP + CO2. Its pathway is pyrimidine metabolism; UMP biosynthesis via de novo pathway; UMP from orotate: step 2/2. This chain is Orotidine 5'-phosphate decarboxylase, found in Mycolicibacterium vanbaalenii (strain DSM 7251 / JCM 13017 / BCRC 16820 / KCTC 9966 / NRRL B-24157 / PYR-1) (Mycobacterium vanbaalenii).